Reading from the N-terminus, the 154-residue chain is Large ribosomal subunit protein uL24 (154 aa).

The tract at residues 97–154 is disordered; the sequence is EIAARKNLPPPEVPEETSNDTKESDENVTGADKEETNEIKEEDLNDNEDKNNDGSQEA. Basic and acidic residues predominate over residues 115–135; the sequence is NDTKESDENVTGADKEETNEI.

It belongs to the universal ribosomal protein uL24 family. In terms of assembly, part of the 50S ribosomal subunit.

Its function is as follows. One of two assembly initiator proteins, it binds directly to the 5'-end of the 23S rRNA, where it nucleates assembly of the 50S subunit. Located at the polypeptide exit tunnel on the outside of the subunit. This Picrophilus torridus (strain ATCC 700027 / DSM 9790 / JCM 10055 / NBRC 100828 / KAW 2/3) protein is Large ribosomal subunit protein uL24.